A 525-amino-acid chain; its full sequence is GMP synthase [glutamine-hydrolyzing] (525 aa).

One can recognise a Glutamine amidotransferase type-1 domain in the interval 9 to 207; sequence RILILDFGSQ…VRDICQCEAL (199 aa). The active-site Nucleophile is the Cys-86. Residues His-181 and Glu-183 contribute to the active site. The region spanning 208 to 400 is the GMPS ATP-PPase domain; sequence WTPAKIIDDA…LGLPYDMLYR (193 aa). 235 to 241 is a binding site for ATP; that stretch reads SGGVDSS.

As to quaternary structure, homodimer.

The catalysed reaction is XMP + L-glutamine + ATP + H2O = GMP + L-glutamate + AMP + diphosphate + 2 H(+). It functions in the pathway purine metabolism; GMP biosynthesis; GMP from XMP (L-Gln route): step 1/1. In terms of biological role, catalyzes the synthesis of GMP from XMP. This is GMP synthase [glutamine-hydrolyzing] from Shigella boydii serotype 18 (strain CDC 3083-94 / BS512).